Reading from the N-terminus, the 278-residue chain is Large ribosomal subunit protein uL2 (278 aa).

Disordered regions lie at residues 29–53 (PEKSLVRPLSKTGGRNSSGRITTRH) and 223–278 (GVAM…GKKR). The span at 255–268 (GRTRRPGKESDKLI) shows a compositional bias: basic and acidic residues. Residues 269 to 278 (VRRRRTGKKR) are compositionally biased toward basic residues.

The protein belongs to the universal ribosomal protein uL2 family. Part of the 50S ribosomal subunit. Forms a bridge to the 30S subunit in the 70S ribosome.

Its function is as follows. One of the primary rRNA binding proteins. Required for association of the 30S and 50S subunits to form the 70S ribosome, for tRNA binding and peptide bond formation. It has been suggested to have peptidyltransferase activity; this is somewhat controversial. Makes several contacts with the 16S rRNA in the 70S ribosome. This is Large ribosomal subunit protein uL2 from Kineococcus radiotolerans (strain ATCC BAA-149 / DSM 14245 / SRS30216).